The sequence spans 349 residues: Putative transport protein jhp_0514 (349 aa).

The next 8 membrane-spanning stretches (helical) occupy residues 6–26, 27–47, 56–76, 143–163, 195–215, 224–244, 258–278, and 300–320; these read FFWI…QDFL, MDAL…VFLN, SFLC…FIVY, LKLV…FYYG, VLLT…TMII, LGIL…LIWI, EAIF…DSVI, and ILIF…GIIV.

Belongs to the autoinducer-2 exporter (AI-2E) (TC 2.A.86) family.

Its subcellular location is the cell membrane. The protein is Putative transport protein jhp_0514 of Helicobacter pylori (strain J99 / ATCC 700824) (Campylobacter pylori J99).